The chain runs to 339 residues: NADH-quinone oxidoreductase subunit H (339 aa).

9 consecutive transmembrane segments (helical) span residues 9–29, 50–70, 82–102, 115–135, 161–181, 187–207, 235–255, 275–295, and 311–331; these read IFPLIIIALKVVAITIPLILC, PNVVGPFGLLQPIADAVKLLF, ILFILAPMITFILSLIGWAVI, VGVLYILAISSLSVYGIIIAG, MGLVIITVLLTTGTLNLSGII, MPWWIDLMLLPMGVVFFISVL, MGFALFFLGEYANMILVSAMT, IPGFFWFVFKVGFLLFCFLWI, and GWKVFLPLTLFWVVLVSSVLV.

The protein belongs to the complex I subunit 1 family. In terms of assembly, NDH-1 is composed of 14 different subunits. Subunits NuoA, H, J, K, L, M, N constitute the membrane sector of the complex.

It localises to the cell inner membrane. The enzyme catalyses a quinone + NADH + 5 H(+)(in) = a quinol + NAD(+) + 4 H(+)(out). In terms of biological role, NDH-1 shuttles electrons from NADH, via FMN and iron-sulfur (Fe-S) centers, to quinones in the respiratory chain. The immediate electron acceptor for the enzyme in this species is believed to be ubiquinone. Couples the redox reaction to proton translocation (for every two electrons transferred, four hydrogen ions are translocated across the cytoplasmic membrane), and thus conserves the redox energy in a proton gradient. This subunit may bind ubiquinone. This Rickettsia felis (strain ATCC VR-1525 / URRWXCal2) (Rickettsia azadi) protein is NADH-quinone oxidoreductase subunit H.